A 374-amino-acid chain; its full sequence is Chaperone protein DnaJ (374 aa).

The 66-residue stretch at 5 to 70 folds into the J domain; that stretch reads DYYEILEIER…GKRQLYDRYG (66 aa). Residues 136–213 form a CR-type zinc finger; sequence GCKKEIKIRY…CNGKGHENKE (78 aa). Cys149, Cys152, Cys165, Cys168, Cys187, Cys190, Cys201, and Cys204 together coordinate Zn(2+). 4 CXXCXGXG motif repeats span residues 149–156, 165–172, 187–194, and 201–208; these read CPDCKGTG, CPDCGGRG, CPKCGGSG, and CPKCNGKG.

Belongs to the DnaJ family. As to quaternary structure, homodimer. Zn(2+) serves as cofactor.

Its subcellular location is the cytoplasm. Functionally, participates actively in the response to hyperosmotic and heat shock by preventing the aggregation of stress-denatured proteins and by disaggregating proteins, also in an autonomous, DnaK-independent fashion. Unfolded proteins bind initially to DnaJ; upon interaction with the DnaJ-bound protein, DnaK hydrolyzes its bound ATP, resulting in the formation of a stable complex. GrpE releases ADP from DnaK; ATP binding to DnaK triggers the release of the substrate protein, thus completing the reaction cycle. Several rounds of ATP-dependent interactions between DnaJ, DnaK and GrpE are required for fully efficient folding. Also involved, together with DnaK and GrpE, in the DNA replication of plasmids through activation of initiation proteins. In Wolinella succinogenes (strain ATCC 29543 / DSM 1740 / CCUG 13145 / JCM 31913 / LMG 7466 / NCTC 11488 / FDC 602W) (Vibrio succinogenes), this protein is Chaperone protein DnaJ.